We begin with the raw amino-acid sequence, 213 residues long: Guanylate kinase (213 aa).

Residues 10-189 (GLLLMVVAPS…AYADLAHIYH (180 aa)) form the Guanylate kinase-like domain. ATP is bound at residue 17–24 (APSGVGKT).

The protein belongs to the guanylate kinase family.

It is found in the cytoplasm. It catalyses the reaction GMP + ATP = GDP + ADP. Functionally, essential for recycling GMP and indirectly, cGMP. This chain is Guanylate kinase (gmk), found in Caulobacter vibrioides (strain ATCC 19089 / CIP 103742 / CB 15) (Caulobacter crescentus).